The following is a 1475-amino-acid chain: Mediator of RNA polymerase II transcription subunit 1.1 (1475 aa).

Disordered stretches follow at residues 579–600, 645–894, and 908–1475; these read STIG…LTSM, GLAS…KMRE, and PDVE…IDDE. Residues 655–666 show a composition bias toward low complexity; that stretch reads PVAAAAAAPGGP. Residues 755–766 show a composition bias toward polar residues; sequence QRSSSEQHNPNP. The segment covering 767–800 has biased composition (low complexity); that stretch reads HQMSQYQMQQYQQNQQFRMHQMQQQQQQQFQMQS. Over residues 810-819 the composition is skewed to acidic residues; the sequence is TDEDSDEECD. Over residues 829–838 the composition is skewed to low complexity; sequence STSSRMSSVP. Residues 869–880 are compositionally biased toward pro residues; it reads TPSPLSAPPKPF. The span at 915–929 shows a compositional bias: low complexity; that stretch reads QQLSSSSSSSQAEAS. A compositionally biased stretch (pro residues) spans 941 to 952; it reads PPKPSSSSAPPP. 2 stretches are compositionally biased toward low complexity: residues 969 to 989 and 1037 to 1049; these read QQEQ…SELA and QKPT…STSS. 3 stretches are compositionally biased toward basic and acidic residues: residues 1052–1070, 1080–1148, and 1155–1180; these read PPKK…EKLI, VVDD…EKEP, and EKKD…KEYS. Residues 1098–1135 adopt a coiled-coil conformation; sequence DRDRDEDREKVRDKEDKAQREKDKKEKERERRRQRDRD. Residues 1181 to 1193 are compositionally biased toward polar residues; that stretch reads KASTTSLIPTLSL. The span at 1199 to 1215 shows a compositional bias: basic and acidic residues; sequence PKKDTVEEEKKDVKEEA. Residues 1242-1252 show a composition bias toward low complexity; sequence APVAPAVQQQQ. Over residues 1281-1291 the composition is skewed to pro residues; the sequence is PLQPPPPPQMT. The span at 1308–1317 shows a compositional bias: polar residues; the sequence is PGSSRPSGNR. Pro residues-rich tracts occupy residues 1320 to 1334 and 1425 to 1440; these read PLPP…PPPD and PPAP…PKDP.

This sequence belongs to the Mediator complex subunit 1 family. As to quaternary structure, component of the Mediator complex.

It localises to the nucleus. Functionally, component of the Mediator complex, a coactivator involved in the regulated transcription of nearly all RNA polymerase II-dependent genes. Mediator functions as a bridge to convey information from gene-specific regulatory proteins to the basal RNA polymerase II transcription machinery. Mediator is recruited to promoters by direct interactions with regulatory proteins and serves as a scaffold for the assembly of a functional preinitiation complex with RNA polymerase II and the general transcription factors. The protein is Mediator of RNA polymerase II transcription subunit 1.1 (sop-3) of Caenorhabditis elegans.